A 125-amino-acid polypeptide reads, in one-letter code: S-adenosylmethionine decarboxylase proenzyme (125 aa).

Ser-61 serves as the catalytic Schiff-base intermediate with substrate; via pyruvic acid. Residue Ser-61 is modified to Pyruvic acid (Ser); by autocatalysis. Residue His-66 is the Proton acceptor; for processing activity of the active site. The active-site Proton donor; for catalytic activity is Cys-81.

This sequence belongs to the prokaryotic AdoMetDC family. Type 1 subfamily. As to quaternary structure, heterotetramer of two alpha and two beta chains arranged as a dimer of alpha/beta heterodimers. Pyruvate serves as cofactor. In terms of processing, is synthesized initially as an inactive proenzyme. Formation of the active enzyme involves a self-maturation process in which the active site pyruvoyl group is generated from an internal serine residue via an autocatalytic post-translational modification. Two non-identical subunits are generated from the proenzyme in this reaction, and the pyruvate is formed at the N-terminus of the alpha chain, which is derived from the carboxyl end of the proenzyme. The post-translation cleavage follows an unusual pathway, termed non-hydrolytic serinolysis, in which the side chain hydroxyl group of the serine supplies its oxygen atom to form the C-terminus of the beta chain, while the remainder of the serine residue undergoes an oxidative deamination to produce ammonia and the pyruvoyl group blocking the N-terminus of the alpha chain.

The enzyme catalyses S-adenosyl-L-methionine + H(+) = S-adenosyl 3-(methylsulfanyl)propylamine + CO2. It functions in the pathway amine and polyamine biosynthesis; S-adenosylmethioninamine biosynthesis; S-adenosylmethioninamine from S-adenosyl-L-methionine: step 1/1. Catalyzes the decarboxylation of S-adenosylmethionine to S-adenosylmethioninamine (dcAdoMet), the propylamine donor required for the synthesis of the polyamines spermine and spermidine from the diamine putrescine. In Prochlorococcus marinus (strain MIT 9313), this protein is S-adenosylmethionine decarboxylase proenzyme.